A 585-amino-acid chain; its full sequence is 4-hydroxy-3-methylbut-2-en-1-yl diphosphate synthase (flavodoxin) (585 aa).

4 residues coordinate [4Fe-4S] cluster: C492, C495, C526, and E533.

Belongs to the IspG family. The cofactor is [4Fe-4S] cluster.

It carries out the reaction (2E)-4-hydroxy-3-methylbut-2-enyl diphosphate + oxidized [flavodoxin] + H2O + 2 H(+) = 2-C-methyl-D-erythritol 2,4-cyclic diphosphate + reduced [flavodoxin]. It functions in the pathway isoprenoid biosynthesis; isopentenyl diphosphate biosynthesis via DXP pathway; isopentenyl diphosphate from 1-deoxy-D-xylulose 5-phosphate: step 5/6. In terms of biological role, converts 2C-methyl-D-erythritol 2,4-cyclodiphosphate (ME-2,4cPP) into 1-hydroxy-2-methyl-2-(E)-butenyl 4-diphosphate. This Akkermansia muciniphila (strain ATCC BAA-835 / DSM 22959 / JCM 33894 / BCRC 81048 / CCUG 64013 / CIP 107961 / Muc) protein is 4-hydroxy-3-methylbut-2-en-1-yl diphosphate synthase (flavodoxin).